Consider the following 396-residue polypeptide: Inositol polyphosphate multikinase (396 aa).

Low complexity predominate over residues 1-13; sequence MAAEPPALRLRPP. The segment at 1–22 is disordered; sequence MAAEPPALRLRPPGSTGDSPPV. Residue Ala-2 is modified to N-acetylalanine. The residue at position 19 (Ser-19) is a Phosphoserine. Lys-58 contacts ATP. Residue Arg-65 coordinates substrate. Residues 114-116 and Asp-127 each bind ATP; that span reads EDV. Substrate-binding positions include Lys-129, 143 to 150, and Gln-179; that span reads KIQQQVSK. The Nuclear localization signal motif lies at 300–310; sequence RHRKLYAKKHQ. Position 365 (Asp-365) interacts with ATP.

The protein belongs to the inositol phosphokinase (IPK) family. Mg(2+) is required as a cofactor.

Its subcellular location is the nucleus. It catalyses the reaction 1D-myo-inositol 1,4,5-trisphosphate + 2 ATP = 1D-myo-inositol 1,3,4,5,6-pentakisphosphate + 2 ADP + 2 H(+). It carries out the reaction 1D-myo-inositol 1,3,4,6-tetrakisphosphate + ATP = 1D-myo-inositol 1,3,4,5,6-pentakisphosphate + ADP + H(+). The enzyme catalyses 1-octadecanoyl-2-(5Z,8Z,11Z,14Z)-eicosatetraenoyl-sn-glycero-3-phospho-1D-myo-inositol 4,5-bisphosphate + ATP = 1-octadecanoyl-2-(5Z,8Z,11Z,14Z-eicosatetraenoyl)-sn-glycero-3-phospho-(1D-myo-inositol 3,4,5-triphosphate) + ADP + H(+). The catalysed reaction is a 1,2-diacyl-sn-glycero-3-phospho-(1D-myo-inositol-4,5-bisphosphate) + ATP = a 1,2-diacyl-sn-glycero-3-phospho-(1D-myo-inositol-3,4,5-trisphosphate) + ADP + H(+). It catalyses the reaction 1D-myo-inositol 1,4,5,6-tetrakisphosphate + ATP = 1D-myo-inositol 1,3,4,5,6-pentakisphosphate + ADP + H(+). It participates in phospholipid metabolism; phosphatidylinositol metabolism. Functionally, inositol phosphate kinase with a broad substrate specificity. Phosphorylates inositol 1,4,5-trisphosphate (Ins(1,4,5)P3) first to inositol 1,3,4,5-tetrakisphosphate and then to inositol 1,3,4,5,6-pentakisphosphate (Ins(1,3,4,5,6)P5). Phosphorylates inositol 1,3,4,6-tetrakisphosphate (Ins(1,3,4,6)P4). Phosphorylates inositol 1,4,5,6-tetrakisphosphate (Ins(1,4,5,6)P4). Phosphorylates glycero-3-phospho-1D-myo-inositol 4,5-bisphosphate to glycero-3-phospho-1D-myo-inositol 3,4,5-trisphosphate. Plays an important role in MLKL-mediated necroptosis via its role in the biosynthesis of inositol pentakisphosphate (InsP5) and inositol hexakisphosphate (InsP6). Binding of these highly phosphorylated inositol phosphates to MLKL mediates the release of an N-terminal auto-inhibitory region, leading to activation of the kinase. Essential for activated phospho-MLKL to oligomerize and localize to the cell membrane during necroptosis. Required for normal embryonic development, probably via its role in the biosynthesis of inositol 1,3,4,5,6-pentakisphosphate (Ins(1,3,4,5,6)P5) and inositol hexakisphosphate (InsP6). In Mus musculus (Mouse), this protein is Inositol polyphosphate multikinase (Ipmk).